The sequence spans 236 residues: Ubiquinone biosynthesis O-methyltransferase (236 aa).

Residues R36, G56, D77, and M125 each coordinate S-adenosyl-L-methionine.

Belongs to the methyltransferase superfamily. UbiG/COQ3 family.

It catalyses the reaction a 3-demethylubiquinol + S-adenosyl-L-methionine = a ubiquinol + S-adenosyl-L-homocysteine + H(+). It carries out the reaction a 3-(all-trans-polyprenyl)benzene-1,2-diol + S-adenosyl-L-methionine = a 2-methoxy-6-(all-trans-polyprenyl)phenol + S-adenosyl-L-homocysteine + H(+). It functions in the pathway cofactor biosynthesis; ubiquinone biosynthesis. Its function is as follows. O-methyltransferase that catalyzes the 2 O-methylation steps in the ubiquinone biosynthetic pathway. The sequence is that of Ubiquinone biosynthesis O-methyltransferase from Haemophilus ducreyi (strain 35000HP / ATCC 700724).